Consider the following 460-residue polypeptide: Bifunctional protein GlmU (460 aa).

The segment at 1-237 (MSSNQYTAGA…DPDLLGVNTP (237 aa)) is pyrophosphorylase. UDP-N-acetyl-alpha-D-glucosamine-binding positions include 13 to 16 (LAAG), K27, Q78, and 83 to 84 (GT). D109 provides a ligand contact to Mg(2+). Residues G146, E160, N177, and N235 each contribute to the UDP-N-acetyl-alpha-D-glucosamine site. N235 provides a ligand contact to Mg(2+). The tract at residues 238–258 (AELMRSEELLRENIVTRHLHN) is linker. The segment at 259 to 460 (GVHVHAAGSV…QKNLRKTRHS (202 aa)) is N-acetyltransferase. Residues R341 and K359 each coordinate UDP-N-acetyl-alpha-D-glucosamine. H371 functions as the Proton acceptor in the catalytic mechanism. UDP-N-acetyl-alpha-D-glucosamine-binding residues include Y374 and N385. Acetyl-CoA contacts are provided by residues A388, 394–395 (NY), S413, A431, and R448.

This sequence in the N-terminal section; belongs to the N-acetylglucosamine-1-phosphate uridyltransferase family. In the C-terminal section; belongs to the transferase hexapeptide repeat family. In terms of assembly, homotrimer. The cofactor is Mg(2+).

Its subcellular location is the cytoplasm. It carries out the reaction alpha-D-glucosamine 1-phosphate + acetyl-CoA = N-acetyl-alpha-D-glucosamine 1-phosphate + CoA + H(+). It catalyses the reaction N-acetyl-alpha-D-glucosamine 1-phosphate + UTP + H(+) = UDP-N-acetyl-alpha-D-glucosamine + diphosphate. The protein operates within nucleotide-sugar biosynthesis; UDP-N-acetyl-alpha-D-glucosamine biosynthesis; N-acetyl-alpha-D-glucosamine 1-phosphate from alpha-D-glucosamine 6-phosphate (route II): step 2/2. Its pathway is nucleotide-sugar biosynthesis; UDP-N-acetyl-alpha-D-glucosamine biosynthesis; UDP-N-acetyl-alpha-D-glucosamine from N-acetyl-alpha-D-glucosamine 1-phosphate: step 1/1. It functions in the pathway bacterial outer membrane biogenesis; LPS lipid A biosynthesis. Functionally, catalyzes the last two sequential reactions in the de novo biosynthetic pathway for UDP-N-acetylglucosamine (UDP-GlcNAc). The C-terminal domain catalyzes the transfer of acetyl group from acetyl coenzyme A to glucosamine-1-phosphate (GlcN-1-P) to produce N-acetylglucosamine-1-phosphate (GlcNAc-1-P), which is converted into UDP-GlcNAc by the transfer of uridine 5-monophosphate (from uridine 5-triphosphate), a reaction catalyzed by the N-terminal domain. The chain is Bifunctional protein GlmU from Oleidesulfovibrio alaskensis (strain ATCC BAA-1058 / DSM 17464 / G20) (Desulfovibrio alaskensis).